The chain runs to 124 residues: uncharacterized protein (124 aa).

Residues 83-100 (VTCFSLYTICYRIVLIWA) traverse the membrane as a helical segment.

It localises to the membrane. This is an uncharacterized protein from Saccharomyces cerevisiae (strain ATCC 204508 / S288c) (Baker's yeast).